The chain runs to 219 residues: Acetylxylan esterase (219 aa).

Residue Ser-15 is the Nucleophile of the active site. Active-site charge relay system residues include Asp-191 and His-194.

The protein belongs to the 'GDSL' lipolytic enzyme family. In terms of assembly, homooctamer, presenting a unique donut-shaped quaternary structure built of two staggered tetrameric rings. The eight active sites are organized in four closely situated pairs, which face the relatively wide internal cavity.

The protein localises to the cytoplasm. It carries out the reaction Deacetylation of xylans and xylo-oligosaccharides.. It participates in glycan degradation; xylan degradation. Its function is as follows. Acetylxylan esterase involved in the degradation of xylan, a major structural heterogeneous polysaccharide found in plant biomass representing the second most abundant polysaccharide in the biosphere, after cellulose. Cleaves acetyl side groups from the xylose backbone units of the hemicellulolytic polymer xylan and xylo-oligosaccharides. Hydrolyzes about 20%-30% of the available acetyl groups on fully acetylated birch wood xylan. Completely deacetylates xylobiose peracetate (fully acetylated), and is active on both the alpha- and beta-forms of the sugar. Also hydrolyzes fully acetylated methyl-beta-D-xylopyranoside and methyl-beta-D-glucopyranoside, and the synthetic substrates 2-naphthyl acetate, 4-nitrophenyl acetate, 4-methylumbelliferyl acetate, and phenyl acetate. This chain is Acetylxylan esterase, found in Geobacillus stearothermophilus (Bacillus stearothermophilus).